A 109-amino-acid chain; its full sequence is Class I hydrophobin G (109 aa).

An N-terminal signal peptide occupies residues Met1–Ala19. 4 disulfide bridges follow: Cys36–Cys90, Cys42–Cys84, Cys43–Cys76, and Cys91–Cys105.

It belongs to the fungal hydrophobin family.

It localises to the secreted. The protein resides in the cell wall. Its function is as follows. Aerial growth, conidiation, and dispersal of filamentous fungi in the environment rely upon a capability of their secreting small amphipathic proteins called hydrophobins (HPBs) with low sequence identity. Class I can self-assemble into an outermost layer of rodlet bundles on aerial cell surfaces, conferring cellular hydrophobicity that supports fungal growth, development and dispersal; whereas Class II form highly ordered films at water-air interfaces through intermolecular interactions but contribute nothing to the rodlet structure. In P.expansum, hydrophobins contribute to germination, tolerance to cold stress and mycotoxins patulin and citrinin production. This is Class I hydrophobin G from Penicillium expansum (Blue mold rot fungus).